The primary structure comprises 225 residues: Probable septum site-determining protein MinC (225 aa).

Positions 87–112 (PTHMASPQGNSSKTRSSDTQPKPKTP) are disordered. Polar residues predominate over residues 91–108 (ASPQGNSSKTRSSDTQPK).

It belongs to the MinC family. As to quaternary structure, interacts with MinD and FtsZ.

Functionally, cell division inhibitor that blocks the formation of polar Z ring septums. Rapidly oscillates between the poles of the cell to destabilize FtsZ filaments that have formed before they mature into polar Z rings. Prevents FtsZ polymerization. This chain is Probable septum site-determining protein MinC, found in Prochlorococcus marinus (strain MIT 9313).